A 161-amino-acid chain; its full sequence is Alpha-crystallin A chain (161 aa).

Position 1 is an N-acetylmethionine (Met-1). Residues 1-53 (MDVTIQHPWFKRALGPFYHNRLFDQFFGEGLFEYDLLPFQSLFRTVLDSGISE) form a required for complex formation with BFSP1 and BFSP2 region. A deamidated glutamine; partial mark is found at Gln-6 and Gln-40. Residues 41–150 (SLFRTVLDSG…SHSERAIPVS (110 aa)) form the sHSP domain. N6-acetyllysine is present on Lys-87. His-88 is a Zn(2+) binding site. Deamidated asparagine; partial is present on Asn-89. Zn(2+) contacts are provided by Glu-90 and His-95. Residue Ser-110 is modified to Phosphoserine. Residue Asn-111 is modified to Deamidated asparagine; partial. Cys-119 and Cys-130 are disulfide-bonded. Residue Gln-135 is modified to Deamidated glutamine; partial. Positions 135–161 (QSGMDASHSERAIPVSREEKASSAPNS) are disordered. Residues 141–155 (SHSERAIPVSREEKA) are compositionally biased toward basic and acidic residues. His-142 serves as a coordination point for Zn(2+). An O-linked (GlcNAc) serine glycan is attached at Ser-150.

It belongs to the small heat shock protein (HSP20) family. In terms of assembly, heteromer composed of three CRYAA and one CRYAB subunits. Inter-subunit bridging via zinc ions enhances stability, which is crucial as there is no protein turn over in the lens. Can also form homodimers and homotetramers (dimers of dimers) which serve as the building blocks of homooligomers. Within homooligomers, the zinc-binding motif is created from residues of 3 different molecules. His-88 and Glu-90 from one molecule are ligands of the zinc ion, and His-95 and His-142 residues from additional molecules complete the site with tetrahedral coordination geometry. Part of a complex required for lens intermediate filament formation composed of BFSP1, BFSP2 and CRYAA. Post-translationally, undergoes age-dependent proteolytical cleavage at the C-terminus.

It is found in the cytoplasm. The protein localises to the nucleus. Contributes to the transparency and refractive index of the lens. In its oxidized form (absence of intramolecular disulfide bond), acts as a chaperone, preventing aggregation of various proteins under a wide range of stress conditions. Required for the correct formation of lens intermediate filaments as part of a complex composed of BFSP1, BFSP2 and CRYAA. The protein is Alpha-crystallin A chain (CRYAA) of Trichechus inunguis (Amazon manatee).